The following is a 187-amino-acid chain: Alpha-D-galactose-binding lectin (187 aa).

Positions 1-37 (MTFAKQSCFNSIILLSIATSYFKIGHKISELGNRIEK) are cleaved as a signal peptide. T39 carries the N-acetylthreonine modification. N-acetyl-alpha-D-galactosamine contacts are provided by residues 53 to 56 (HPKG), D64, 72 to 76 (DIHER), H101, G104, E112, 120 to 122 (DRH), H145, G148, E156, and 164 to 166 (DKH).

In terms of assembly, homodimer. Highest expression in the posterior part of the mantle. Highly expressed in gills and to a lesser extent in mid mantle and anterior muscle. Lowest expression in digestive gland and posterior adductor muscle. Scarcely detectable in hemocytes.

With respect to regulation, agglutination of E.coli is inhibited by alpha-galactoside melibiose, but not by beta-galactoside lactose. Alpha-D-galactose-binding lectin. Binds D-GalNAc, but not glucose or its derivatives. Has hemagglutinating activity towards rabbit erythrocytes. Agglutinates bacteria. Has bacteriostatic activity on both Gram-positive and Gram-negative bacteria including B.subtilis, S.aureus, E.coli and V.parahaemolyticus, respectively. Has a dose-dependent cytotoxic effect on the human globotriaosylceramide (Gb3)-expressing Epstein-Barr virus (EBV)-positive Burkitt's lymphoma (Raji) cell line. Has dose-dependent cytotoxic effect on another Burkitt's lymphoma (Ramos) cell line, which does not possess the EBV genome, but also expresses Gb3. Binds to Gb3 in these cells leading to phosphorylation of MEK1/2, ERK1/2, JNK and p38 kinase, activation of caspase-9/3 and to expression of p21 and tumor necrosis factor (TNF)-alpha. No cytotoxic effect on the human chronic myelogenous leukemia (K-562) cell line, which does not express Gb3. May be involved in innate immunity acting as an antibacterial or antifungal agent. May be a pattern recognition receptor (PRR) involved in recognition of glycans found on parasitic or symbiotic microorganisms. The protein is Alpha-D-galactose-binding lectin of Mytilus galloprovincialis (Mediterranean mussel).